The chain runs to 183 residues: Large ribosomal subunit protein uL6 (183 aa).

It belongs to the universal ribosomal protein uL6 family. As to quaternary structure, part of the 50S ribosomal subunit.

In terms of biological role, this protein binds to the 23S rRNA, and is important in its secondary structure. It is located near the subunit interface in the base of the L7/L12 stalk, and near the tRNA binding site of the peptidyltransferase center. The protein is Large ribosomal subunit protein uL6 of Ruminiclostridium cellulolyticum (strain ATCC 35319 / DSM 5812 / JCM 6584 / H10) (Clostridium cellulolyticum).